We begin with the raw amino-acid sequence, 267 residues long: LysM and putative peptidoglycan-binding domain-containing protein 4 (267 aa).

Residues 1–211 are Extracellular-facing; sequence MRRGDPPPRA…RSNGADWGIQ (211 aa). Positions 30–64 are disordered; that stretch reads HRQEEPEASSEDEELNVMELRPRSRDSSSKEKEGV. Residues 35-45 are compositionally biased toward acidic residues; the sequence is PEASSEDEELN. Positions 49 to 64 are enriched in basic and acidic residues; sequence LRPRSRDSSSKEKEGV. The region spanning 70 to 114 is the LysM domain; sequence LERDISHEDNLSKLALQYGCKVADIKRVNNLFQEQDMYALKSIKI. N-linked (GlcNAc...) asparagine glycosylation is present at N79. The disordered stretch occupies residues 130–152; the sequence is RTPQQRPSHDAAPSNSAMASVSG. The span at 142 to 152 shows a compositional bias: polar residues; the sequence is PSNSAMASVSG. The chain crosses the membrane as a helical span at residues 212–232; it reads WWNAVIAMLLIGIVLPIFYVV. Residues 233-267 lie on the Cytoplasmic side of the membrane; the sequence is YYKTKDSGESAVDNVGVNISVSTSNSTREYNGKSP.

The protein localises to the membrane. The protein is LysM and putative peptidoglycan-binding domain-containing protein 4 (lysmd4) of Danio rerio (Zebrafish).